The primary structure comprises 154 residues: 6,7-dimethyl-8-ribityllumazine synthase (154 aa).

Residues Phe22, 56 to 58 (AFE), and 80 to 82 (AVI) contribute to the 5-amino-6-(D-ribitylamino)uracil site. 85–86 (AT) contributes to the (2S)-2-hydroxy-3-oxobutyl phosphate binding site. Residue His88 is the Proton donor of the active site. Residue Phe113 participates in 5-amino-6-(D-ribitylamino)uracil binding. Arg127 is a (2S)-2-hydroxy-3-oxobutyl phosphate binding site.

This sequence belongs to the DMRL synthase family.

The catalysed reaction is (2S)-2-hydroxy-3-oxobutyl phosphate + 5-amino-6-(D-ribitylamino)uracil = 6,7-dimethyl-8-(1-D-ribityl)lumazine + phosphate + 2 H2O + H(+). Its pathway is cofactor biosynthesis; riboflavin biosynthesis; riboflavin from 2-hydroxy-3-oxobutyl phosphate and 5-amino-6-(D-ribitylamino)uracil: step 1/2. Functionally, catalyzes the formation of 6,7-dimethyl-8-ribityllumazine by condensation of 5-amino-6-(D-ribitylamino)uracil with 3,4-dihydroxy-2-butanone 4-phosphate. This is the penultimate step in the biosynthesis of riboflavin. This is 6,7-dimethyl-8-ribityllumazine synthase from Desulfitobacterium hafniense (strain DSM 10664 / DCB-2).